The following is a 148-amino-acid chain: uncharacterized protein (148 aa).

The next 4 membrane-spanning stretches (helical) occupy residues 29–49 (FSLVIVTLMMSIVVVLAAAKE), 61–81 (PIILMISIGIVVFLLIPPLVM), 99–119 (FIVFTFLGLIPIGFLIPNGFL), and 121–141 (ILVSIAGTLVSIASVAVTLCI).

It localises to the cell membrane. This is an uncharacterized protein from Bacillus subtilis (strain 168).